Reading from the N-terminus, the 141-residue chain is Small ribosomal subunit protein bS18c (141 aa).

Disordered regions lie at residues 14–55 and 120–141; these read EFIA…IKPG and IKRR…RPKK. The segment covering 24–34 has biased composition (pro residues); that stretch reads PKAPLQPPLPP. Basic residues predominate over residues 35–51; it reads SKRKGKPPKSPRRRSSR.

Belongs to the bacterial ribosomal protein bS18 family. Part of the 30S ribosomal subunit.

The protein resides in the plastid. It localises to the chloroplast. The sequence is that of Small ribosomal subunit protein bS18c from Pelargonium hortorum (Common geranium).